Reading from the N-terminus, the 647-residue chain is Chaperone protein DnaK (647 aa).

Threonine 198 carries the phosphothreonine; by autocatalysis modification. The segment at glycine 606–valine 634 is disordered. The span at asparagine 615–asparagine 628 shows a compositional bias: polar residues.

It belongs to the heat shock protein 70 family.

Acts as a chaperone. This Psychrobacter cryohalolentis (strain ATCC BAA-1226 / DSM 17306 / VKM B-2378 / K5) protein is Chaperone protein DnaK.